The chain runs to 88 residues: Small ribosomal subunit protein uS15 (88 aa).

Belongs to the universal ribosomal protein uS15 family. In terms of assembly, part of the 30S ribosomal subunit. Forms a bridge to the 50S subunit in the 70S ribosome, contacting the 23S rRNA.

One of the primary rRNA binding proteins, it binds directly to 16S rRNA where it helps nucleate assembly of the platform of the 30S subunit by binding and bridging several RNA helices of the 16S rRNA. Its function is as follows. Forms an intersubunit bridge (bridge B4) with the 23S rRNA of the 50S subunit in the ribosome. This is Small ribosomal subunit protein uS15 from Acidovorax sp. (strain JS42).